A 241-amino-acid chain; its full sequence is Dolichol-phosphate mannosyltransferase subunit 1 (241 aa).

11 residues coordinate GDP-alpha-D-mannose: P13, Y15, E17, I44, D46, D99, A100, D101, R128, R215, and K221. A Mg(2+)-binding site is contributed by D101. D101 is a Mn(2+) binding site.

It belongs to the glycosyltransferase 2 family. Requires Mg(2+) as cofactor. Mn(2+) serves as cofactor. The cofactor is Ca(2+).

Its subcellular location is the endoplasmic reticulum. It catalyses the reaction a di-trans,poly-cis-dolichyl phosphate + GDP-alpha-D-mannose = a di-trans,poly-cis-dolichyl beta-D-mannosyl phosphate + GDP. Its pathway is protein modification; protein glycosylation. Its function is as follows. Transfers mannose from GDP-mannose to dolichol monophosphate to form dolichol phosphate mannose (Dol-P-Man) which is the mannosyl donor in pathways leading to N-glycosylation, glycosyl phosphatidylinositol membrane anchoring, and O-mannosylation of proteins. The polypeptide is Dolichol-phosphate mannosyltransferase subunit 1 (Drosophila melanogaster (Fruit fly)).